The following is a 994-amino-acid chain: Chloride channel protein 1 (994 aa).

Topologically, residues 1-118 (MERSQSQQHG…VLRRKLGEDW (118 aa)) are cytoplasmic. The segment at 37–61 (SENGGLQHRPRKDLGPRHNAHPTQI) is disordered. A helical membrane pass occupies residues 119 to 150 (IFLVLLGLLMALVSWCMDYVSAKSLQAYKWTY). Residues 151-158 (AQMQPSLP) lie on the Extracellular side of the membrane. A helical membrane pass occupies residues 159-179 (LQYLAWVTFPLILILFSALFC). Residues 180 to 183 (QLIS) lie on the Cytoplasmic side of the membrane. The note=Loop between two helices intramembrane region spans 184-189 (PQAVGS). The short motif at 188-192 (GSGIP) is the Selectivity filter part_1 element. Ser-189 lines the chloride pocket. Positions 190–195 (GIPEMK) form an intramembrane region, helical. At 196-208 (TILRGVVLKEYLT) the chain is on the cytoplasmic side. Residues 209 to 224 (LKAFVAKVVALTAGLG) constitute an intramembrane region (helical). The segment at residues 225 to 230 (SGIPVG) is an intramembrane region (note=Loop between two helices). A Selectivity filter part_2 motif is present at residues 230–234 (GKEGP). The helical intramembrane region spans 231–246 (KEGPFVHIASICAAVL). Residues 247-268 (SKFMSMFSGVYEQPYYYTDILT) are Cytoplasmic-facing. Intramembrane regions (helical) lie at residues 269–280 (VGCAVGVGCCFG) and 281–290 (TPLGGVLFSI). Topologically, residues 291–301 (EVTSTYFAVRN) are cytoplasmic. Residues 302–321 (YWRGFFAATFSAFVFRVLAV) traverse the membrane as a helical segment. At 322–347 (WNKDAVTITALFRTNFRMDFPFDLKE) the chain is on the extracellular side. A helical membrane pass occupies residues 348-376 (LPAFAVIGICCGFLGAVFVYLHRQVMLGV). Residues 377 to 390 (RKHKALSQFLAKHR) are Cytoplasmic-facing. Residues 391-408 (LLYPGIVTFVIASLTFPP) traverse the membrane as a helical segment. Topologically, residues 409–414 (GMGQFM) are extracellular. An intramembrane region (note=Loop between two helices) is located at residues 415 to 418 (AGEL). Positions 419–426 (MPREAIST) form an intramembrane region, helical. Residues 427–457 (LFDNNTWVKHIGDPKSLGQSAVWIHPQVNVV) lie on the Extracellular side of the membrane. An intramembrane region (helical) is located at residues 458 to 475 (IIILLFFVMKFWMSIVAT). Residues 476-482 (TMPIPCG) constitute an intramembrane region (note=Loop between two helices). The Selectivity filter part_3 motif lies at 482 to 486 (GGFMP). The segment at residues 483–498 (GFMPVFVLGAAFGRLV) is an intramembrane region (helical). Residue Phe-484 coordinates chloride. Residues 499–521 (GEIMAMLFPEGILFDDIIYKILP) are Extracellular-facing. Residues 522–538 (GGYAVIGAAALTGAVSH) constitute an intramembrane region (helical). The segment at residues 539-540 (TV) is an intramembrane region (note=Loop between two helices). Residues 541–554 (STAVICFELTGQIA) constitute an intramembrane region (helical). Topologically, residues 555 to 557 (HIL) are extracellular. The helical intramembrane region spans 558–571 (PMMVAVILANMVAQ). The segment at residues 572–575 (SLQP) is an intramembrane region (note=Loop between two helices). The helical intramembrane region spans 576–578 (SLY). Tyr-578 provides a ligand contact to chloride. Over 579–994 (DSIIQVKKLP…DEEDEDELIL (416 aa)) the chain is Cytoplasmic. Residues 609-668 (MVRDVKFVSASCTYGELRNLLQTTTVKTLPLVDSKDSMILLGSVERSELQSLLQRHLCAE) form the CBS 1 domain. 3 disordered regions span residues 710 to 769 (EDED…SADQ), 880 to 923 (TKSG…DGAP), and 965 to 994 (NLGP…ELIL). The segment covering 725 to 741 (TPTPPPPPPPPLPPQFP) has biased composition (pro residues). Residues 827 to 882 (IDQSPFQLVEQTTLHKTHTLFSLLGLHLAYVTSMGKLRGVLALEELQKAIKGHTKS) form the CBS 2 domain. Residue Ser-892 is modified to Phosphoserine. The segment covering 985 to 994 (DEEDEDELIL) has biased composition (acidic residues).

The protein belongs to the chloride channel (TC 2.A.49) family. ClC-1/CLCN1 subfamily. Homodimer. As to expression, predominantly expressed in skeletal muscles.

The protein resides in the cell membrane. It localises to the sarcolemma. The protein localises to the T-tubule. It catalyses the reaction chloride(in) = chloride(out). The catalysed reaction is bromide(in) = bromide(out). It carries out the reaction iodide(out) = iodide(in). The enzyme catalyses thiocyanate(in) = thiocyanate(out). It catalyses the reaction nitrate(in) = nitrate(out). Its activity is regulated as follows. Modulated by membrane voltage with depolarization favouring channel opening and hyperpolarization favouring channel closure. Inhibited by acidic pH and ATP binding due to a shift of voltage dependence of common gating to more positive voltages. Inhibited by 9-anthracene-carboxylic acid. Functionally, voltage-gated chloride channel involved in skeletal muscle excitability. Generates most of the plasma membrane chloride conductance in skeletal muscle fibers, stabilizes the resting membrane potential and contributes to the repolarization phase during action potential firing. Forms a homodimeric channel where each subunit has its own ion conduction pathway. Conducts double-barreled currents controlled by two types of gates, two fast glutamate gates that control each subunit independently and a slow common gate that opens and shuts off both subunits simultaneously. Has a significant open probability at muscle resting potential and is further activated upon membrane depolarization. Permeable to small monovalent anions with ion selectivity for chloride &gt; thiocyanate &gt; bromide &gt; nitrate &gt; iodide. The protein is Chloride channel protein 1 (Clcn1) of Rattus norvegicus (Rat).